The sequence spans 349 residues: NADH-quinone oxidoreductase subunit H (349 aa).

Transmembrane regions (helical) follow at residues 20–42 (WTLI…LTYF), 88–108 (GIFI…WAVV), 123–143 (LLYI…SGWA), 167–187 (MGFS…VEIV), 202–222 (FLSW…ISGV), 249–269 (GMAF…VSAL), 284–304 (FLPD…FLFL), and 325–345 (VFVP…MSPL).

The protein belongs to the complex I subunit 1 family. As to quaternary structure, NDH-1 is composed of 14 different subunits. Subunits NuoA, H, J, K, L, M, N constitute the membrane sector of the complex.

Its subcellular location is the cell inner membrane. The enzyme catalyses a quinone + NADH + 5 H(+)(in) = a quinol + NAD(+) + 4 H(+)(out). Functionally, NDH-1 shuttles electrons from NADH, via FMN and iron-sulfur (Fe-S) centers, to quinones in the respiratory chain. The immediate electron acceptor for the enzyme in this species is believed to be ubiquinone. Couples the redox reaction to proton translocation (for every two electrons transferred, four hydrogen ions are translocated across the cytoplasmic membrane), and thus conserves the redox energy in a proton gradient. This subunit may bind ubiquinone. The sequence is that of NADH-quinone oxidoreductase subunit H from Dechloromonas aromatica (strain RCB).